Reading from the N-terminus, the 484-residue chain is Serine/arginine-rich splicing factor 11 (484 aa).

Positions 1-33 are disordered; it reads MSNTTVVPSTAGPGPSGGPGGGGGGGGGGGGTE. At Ser2 the chain carries N-acetylserine. The segment covering 14–32 has biased composition (gly residues); that stretch reads GPSGGPGGGGGGGGGGGGT. Positions 33–113 constitute an RRM domain; that stretch reads EVIQVTNVSP…ALIVVPYAEG (81 aa). Lys197 is covalently cross-linked (Glycyl lysine isopeptide (Lys-Gly) (interchain with G-Cter in SUMO2)). Residue Ser207 is modified to Phosphoserine. Lys211 participates in a covalent cross-link: Glycyl lysine isopeptide (Lys-Gly) (interchain with G-Cter in SUMO2). A Phosphoserine modification is found at Ser212. The interval 233-484 is disordered; the sequence is ISAAIEPDKK…HHEEDMDMSD (252 aa). Positions 244–308 are enriched in basic residues; the sequence is EKRRHSRSRS…ERGRRSRSTS (65 aa). Repeat copies occupy residues 247–255, 258–265, 267–274, 275–282, 285–292, 293–300, 302–309, 321–328, 334–341, and 346–353. A 10 X 8 AA approximate repeats of R-R-S-R-S-R-S-R region spans residues 247–353; it reads RHSRSRSRSR…RRRRSRSGTR (107 aa). Basic and acidic residues predominate over residues 309 to 320; it reads KTRDKKKEDKEK. Ser323 carries the phosphoserine modification. Thr325 carries the post-translational modification Phosphothreonine. Residues 334–379 show a composition bias toward basic residues; the sequence is RRSRSASRERRRRRSRSGTRSPKKPRSPKRKLSRSPSPRRHKKEKK. Basic and acidic residues-rich tracts occupy residues 380–395, 402–424, and 433–478; these read KDKD…ERST, KDKE…VTRD, and DSEK…HHEE. Phosphoserine occurs at positions 414 and 434. At Thr447 the chain carries Phosphothreonine. A phosphoserine mark is found at Ser449, Ser456, Ser464, and Ser483.

It belongs to the splicing factor SR family. Interacts with PUF60.

The protein localises to the nucleus. May function in pre-mRNA splicing. This chain is Serine/arginine-rich splicing factor 11 (SRSF11), found in Homo sapiens (Human).